The sequence spans 402 residues: Argininosuccinate synthase (402 aa).

Position 9 to 17 (Ala9 to Ser17) interacts with ATP. An L-citrulline-binding site is contributed by Tyr86. Gly116 is an ATP binding site. Thr118, Asn122, and Asp123 together coordinate L-aspartate. L-citrulline is bound at residue Asn122. Residues Arg126, Ser174, Ser183, Glu259, and Tyr271 each contribute to the L-citrulline site.

Belongs to the argininosuccinate synthase family. Type 1 subfamily. Homotetramer.

It is found in the cytoplasm. The catalysed reaction is L-citrulline + L-aspartate + ATP = 2-(N(omega)-L-arginino)succinate + AMP + diphosphate + H(+). Its pathway is amino-acid biosynthesis; L-arginine biosynthesis; L-arginine from L-ornithine and carbamoyl phosphate: step 2/3. This is Argininosuccinate synthase from Anoxybacillus flavithermus (strain DSM 21510 / WK1).